The chain runs to 638 residues: Cytoplasmic dynein 1 intermediate chain 2 (638 aa).

Basic and acidic residues-rich tracts occupy residues 1-13 (MSDKSELKAELER) and 20-43 (QIREEKKRKEEERKKKETDQKKEA). 2 disordered regions span residues 1 to 135 (MSDK…GRGP) and 155 to 214 (TYTK…EEKQ). N-acetylserine is present on S2. The residue at position 51 (S51) is a Diphosphoserine. A phosphoserine mark is found at S51, S73, W81, P84, and S90. The span at 88–97 (PSSKSVSTPS) shows a compositional bias: low complexity. The residue at position 95 (T95) is a Phosphothreonine. 3 positions are modified to phosphoserine: S97, S101, and S104. Residues 190 to 214 (EKTLKKDEENDSKAPPHELTEEEKQ) are compositionally biased toward basic and acidic residues. 7 WD repeats span residues 277–326 (SKHR…TTPE), 330–370 (HCQS…RTPV), 379–420 (AHTH…HPQD), 429–469 (SKAV…AGIS), 474–519 (GHQG…PLYS), 522–562 (DNAD…EVPT), and 568–607 (EGNPALNRVRWTHSGREIAVGDSEGQIVIYDVGEQIAVPR).

This sequence belongs to the dynein intermediate chain family. As to quaternary structure, homodimer. The cytoplasmic dynein 1 complex consists of two catalytic heavy chains (HCs) and a number of non-catalytic subunits presented by intermediate chains (ICs), light intermediate chains (LICs) and light chains (LCs); the composition seems to vary in respect to the IC, LIC and LC composition. The heavy chain homodimer serves as a scaffold for the probable homodimeric assembly of the respective non-catalytic subunits. The ICs and LICs bind directly to the HC dimer and the LCs assemble on the IC dimer. Interacts with DYNLT3. Interacts with DYNLT1. Interacts (dephosphorylated at Ser-90) with DCTN1. Interacts with BICD2. Interacts with SPEF2. Interacts with CFAP61. (Microbial infection) Interacts with human adenovirus 5 hexon protein; this interaction probably allows virus intracellular transport. Post-translationally, the phosphorylation status of Ser-90 appears to be involved in dynactin-dependent target binding. Pyrophosphorylation by 5-diphosphoinositol pentakisphosphate (5-IP7) promotes interaction with DCTN1. Serine pyrophosphorylation is achieved by Mg(2+)-dependent, but enzyme independent transfer of a beta-phosphate from a inositol pyrophosphate to a pre-phosphorylated serine residue.

It localises to the cytoplasm. It is found in the cytoskeleton. In terms of biological role, acts as one of several non-catalytic accessory components of the cytoplasmic dynein 1 complex that are thought to be involved in linking dynein to cargos and to adapter proteins that regulate dynein function. Cytoplasmic dynein 1 acts as a motor for the intracellular retrograde motility of vesicles and organelles along microtubules. The intermediate chains mediate the binding of dynein to dynactin via its 150 kDa component (p150-glued) DCTN1. Involved in membrane-transport, such as Golgi apparatus, late endosomes and lysosomes. The chain is Cytoplasmic dynein 1 intermediate chain 2 from Homo sapiens (Human).